The chain runs to 279 residues: Methylthioribulose-1-phosphate dehydratase (279 aa).

Cys-132 provides a ligand contact to substrate. Zn(2+) is bound by residues His-150 and His-152. The active-site Proton donor/acceptor is Glu-175. His-240 serves as a coordination point for Zn(2+).

It belongs to the aldolase class II family. MtnB subfamily. Zn(2+) is required as a cofactor.

Its subcellular location is the cytoplasm. It carries out the reaction 5-(methylsulfanyl)-D-ribulose 1-phosphate = 5-methylsulfanyl-2,3-dioxopentyl phosphate + H2O. It participates in amino-acid biosynthesis; L-methionine biosynthesis via salvage pathway; L-methionine from S-methyl-5-thio-alpha-D-ribose 1-phosphate: step 2/6. Catalyzes the dehydration of methylthioribulose-1-phosphate (MTRu-1-P) into 2,3-diketo-5-methylthiopentyl-1-phosphate (DK-MTP-1-P). The polypeptide is Methylthioribulose-1-phosphate dehydratase (Candida tropicalis (strain ATCC MYA-3404 / T1) (Yeast)).